Consider the following 639-residue polypeptide: Kinesin-like protein KIF22 (639 aa).

Positions 18–345 (RVRVAVRLRP…LNFAAKSKQI (328 aa)) constitute a Kinesin motor domain. ATP is bound at residue 102-109 (GPTGAGKT). The tract at residues 358–400 (IAALPAMKRPREEAETAAGSRQRKKSKTDSTESSPNTSMDAAS) is disordered. Positions 388–397 (TESSPNTSMD) are enriched in polar residues. The stretch at 439-484 (KRERMALLKKWEESQMEIERLKEKQKELEQKAIEAEARLEKSTNSD) forms a coiled coil. The Important for regulated proteolytic degradation motif lies at 549 to 552 (GREN).

Belongs to the TRAFAC class myosin-kinesin ATPase superfamily. Kinesin family. Post-translationally, ubiquitinated, leading to its subsequent proteasomal degradation.

The protein localises to the nucleus. It is found in the cytoplasm. It localises to the cytoskeleton. Kinesin family member that is involved in spindle formation and the movements of chromosomes during mitosis and meiosis. Binds to microtubules and to DNA. The sequence is that of Kinesin-like protein KIF22 (kif22) from Xenopus tropicalis (Western clawed frog).